The chain runs to 214 residues: Dimethylamine corrinoid protein 2 (214 aa).

The B12-binding N-terminal domain maps to 1 to 91; sequence MATKEELIQE…DMPAGAATKK (91 aa). Residues 92 to 214 enclose the B12-binding domain; sequence LGVIVNGTVE…AVAKAKELLL (123 aa). His-105 is a binding site for methylcob(III)alamin.

The protein belongs to the methylamine corrinoid protein family.

It participates in one-carbon metabolism; methanogenesis from dimethylamine. Functionally, acts as a methyl group carrier between MtbB and MtbA. This Methanosarcina mazei (strain ATCC BAA-159 / DSM 3647 / Goe1 / Go1 / JCM 11833 / OCM 88) (Methanosarcina frisia) protein is Dimethylamine corrinoid protein 2 (mtbC2).